The primary structure comprises 804 residues: Zinc finger protein YGR067C (804 aa).

2 C2H2-type zinc fingers span residues 8 to 30 (YICS…ERSH) and 36 to 59 (FQCQ…RTVH). Positions 782–796 (QEFSASSTDNKQSKN) are enriched in polar residues. Residues 782–804 (QEFSASSTDNKQSKNIEIFSQIK) form a disordered region.

The protein localises to the nucleus. The polypeptide is Zinc finger protein YGR067C (Saccharomyces cerevisiae (strain ATCC 204508 / S288c) (Baker's yeast)).